A 347-amino-acid chain; its full sequence is Endophilin-A3 (347 aa).

Residues 1–21 form a membrane-binding amphipathic helix region; the sequence is MSVAGLKKQFHKASQLFSEKI. The 232-residue stretch at 18–249 folds into the BAR domain; the sequence is SEKISGAEGT…LQMRISAASS (232 aa). The tract at residues 60 to 87 is required for dimerization upon membrane association; sequence PNPAYRAKLGMLNTVSKIRGQVKTTGYP. A coiled-coil region spans residues 181-201; the sequence is EEVRQAVEKFEESKELAERSM. The segment at 218-254 is interaction with ARC; it reads FIEAALDYHRQSTEILQELQSKLQMRISAASSVPRRE. The disordered stretch occupies residues 248–271; the sequence is SSVPRREYKPRPVKRSSSELNGVS. A Phosphoserine modification is found at S265. Residues 285–344 enclose the SH3 domain; it reads MDQPCCRGLYDFEPENQGELGFKEGDIITLTNQIDENWYEGMIHGESGFFPINYVEVIVP.

It belongs to the endophilin family. As to quaternary structure, interacts with ARC. Interacts with DNM1, SGIP1 and SYNJ1. Interacts with the huntingtin exon 1 protein (HDEX1P) containing a glutamine repeat in the pathological range and promotes formation of insoluble polyglutamine-containing aggregates in vivo. Interacts with DYDC1. Interacts with FASLG. Interacts with ATXN2. Interacts with BIN2. Brain and testis.

The protein resides in the cytoplasm. It is found in the early endosome membrane. Implicated in endocytosis. May recruit other proteins to membranes with high curvature. The polypeptide is Endophilin-A3 (SH3GL3) (Homo sapiens (Human)).